A 231-amino-acid polypeptide reads, in one-letter code: 7-cyano-7-deazaguanine synthase (231 aa).

8 to 18 (FSGGQDSTTCL) provides a ligand contact to ATP. The Zn(2+) site is built by cysteine 188, cysteine 197, cysteine 200, and cysteine 203.

This sequence belongs to the QueC family. Requires Zn(2+) as cofactor.

The catalysed reaction is 7-carboxy-7-deazaguanine + NH4(+) + ATP = 7-cyano-7-deazaguanine + ADP + phosphate + H2O + H(+). The protein operates within purine metabolism; 7-cyano-7-deazaguanine biosynthesis. Its function is as follows. Catalyzes the ATP-dependent conversion of 7-carboxy-7-deazaguanine (CDG) to 7-cyano-7-deazaguanine (preQ(0)). The chain is 7-cyano-7-deazaguanine synthase from Pectobacterium carotovorum subsp. carotovorum (strain PC1).